The following is a 105-amino-acid chain: Large ribosomal subunit protein uL24 (105 aa).

Belongs to the universal ribosomal protein uL24 family. As to quaternary structure, part of the 50S ribosomal subunit.

In terms of biological role, one of two assembly initiator proteins, it binds directly to the 5'-end of the 23S rRNA, where it nucleates assembly of the 50S subunit. One of the proteins that surrounds the polypeptide exit tunnel on the outside of the subunit. This chain is Large ribosomal subunit protein uL24, found in Dictyoglomus turgidum (strain DSM 6724 / Z-1310).